The primary structure comprises 569 residues: Urease subunit alpha (569 aa).

Positions 131–569 (GGMDAHIHYI…LPMAQRYFLF (439 aa)) constitute a Urease domain. 3 residues coordinate Ni(2+): histidine 136, histidine 138, and lysine 218. Lysine 218 carries the N6-carboxylysine modification. Residue histidine 220 coordinates substrate. Ni(2+) is bound by residues histidine 247 and histidine 273. Histidine 321 serves as the catalytic Proton donor. Aspartate 361 is a binding site for Ni(2+).

This sequence belongs to the metallo-dependent hydrolases superfamily. Urease alpha subunit family. In terms of assembly, heterotrimer of UreA (gamma), UreB (beta) and UreC (alpha) subunits. Three heterotrimers associate to form the active enzyme. Requires Ni cation as cofactor. In terms of processing, carboxylation allows a single lysine to coordinate two nickel ions.

It localises to the cytoplasm. It carries out the reaction urea + 2 H2O + H(+) = hydrogencarbonate + 2 NH4(+). Its pathway is nitrogen metabolism; urea degradation; CO(2) and NH(3) from urea (urease route): step 1/1. The chain is Urease subunit alpha from Agrobacterium fabrum (strain C58 / ATCC 33970) (Agrobacterium tumefaciens (strain C58)).